A 1020-amino-acid chain; its full sequence is Calcium-transporting ATPase 1 (1020 aa).

Met1 carries the N-acetylmethionine modification. At 1-162 (MESYLNENFG…NQFTESPSRG (162 aa)) the chain is on the stromal side. The segment at 21 to 32 (ALQRWRKLCWIV) is interaction with calmodulin. Phosphoserine; by CPK is present on Ser46. A helical transmembrane segment spans residues 163–183 (FWLFVWEALQDTTLMILAACA). Residues 184 to 201 (FVSLIVGILMEGWPIGAH) lie on the Lumenal side of the membrane. A helical membrane pass occupies residues 202 to 222 (DGLGIVASILLVVFVTATSDY). Over 223–350 (RQSLQFKDLD…DDETPLQVKL (128 aa)) the chain is Stromal. A helical transmembrane segment spans residues 351–370 (NGVATIIGKIGLFFAVITFA). The Lumenal portion of the chain corresponds to 371–400 (VLVQGLANQKRLDNSHWIWTADELMAMLEY). The chain crosses the membrane as a helical span at residues 401–418 (FAVAVTIVVVAVPEGLPL). Topologically, residues 419 to 813 (AVTLSLAFAM…KWGRSVYINI (395 aa)) are stromal. The 4-aspartylphosphate intermediate role is filled by Asp456. 2 residues coordinate Mg(2+): Asp758 and Asp762. A helical membrane pass occupies residues 814–832 (QKFVQFQLTVNVVALIVNF). The Lumenal segment spans residues 833–843 (LSACLTGNAPL). A helical membrane pass occupies residues 844 to 864 (TAVQLLWVNMIMDTLGALALA). Over 865-884 (TEPPQDDLMKRSPVGRKGNF) the chain is Stromal. Residues 885 to 907 (ISNVMWRNILGQSLYQLVIIWCL) traverse the membrane as a helical segment. Residues 908–919 (QTKGKTMFGLDG) are Lumenal-facing. A helical transmembrane segment spans residues 920-941 (PDSDLTLNTLIFNIFVFCQVFN). Topologically, residues 942-959 (EISSREMEKIDVFKGILK) are stromal. A helical transmembrane segment spans residues 960–981 (NYVFVAVLTCTVVFQVIIIELL). At 982 to 991 (GTFADTTPLN) the chain is on the lumenal side. A helical transmembrane segment spans residues 992–1013 (LGQWLVSIILGFLGMPVAAALK). The Stromal segment spans residues 1014–1020 (MIPVGSH).

This sequence belongs to the cation transport ATPase (P-type) (TC 3.A.3) family. Type IIB subfamily. Expressed at higher levels in roots than in leaves.

It is found in the plastid. The protein resides in the chloroplast inner membrane. The catalysed reaction is Ca(2+)(in) + ATP + H2O = Ca(2+)(out) + ADP + phosphate + H(+). Its activity is regulated as follows. Activated by calmodulin. Its function is as follows. This magnesium-dependent enzyme catalyzes the hydrolysis of ATP coupled with the translocation of calcium from the cytosol out of the cell or into organelles. The sequence is that of Calcium-transporting ATPase 1 (ACA1) from Arabidopsis thaliana (Mouse-ear cress).